The sequence spans 70 residues: Beta-insect excitatory toxin LqqIT1 (70 aa).

The LCN-type CS-alpha/beta domain occupies lysine 2–aspartate 65. 4 cysteine pairs are disulfide-bonded: cysteine 16/cysteine 37, cysteine 22/cysteine 42, cysteine 26/cysteine 44, and cysteine 38/cysteine 64.

Belongs to the long (4 C-C) scorpion toxin superfamily. Sodium channel inhibitor family. Beta subfamily. In terms of tissue distribution, expressed by the venom gland.

It is found in the secreted. Excitatory insect beta-toxins induce a spastic paralysis. They bind voltage-independently at site-4 of sodium channels (Nav) and shift the voltage of activation toward more negative potentials thereby affecting sodium channel activation and promoting spontaneous and repetitive firing. In vivo, this toxin induces a fast excitatory contraction paralysis on fly larvae. It is active only on insects. In Leiurus quinquestriatus quinquestriatus (Egyptian scorpion), this protein is Beta-insect excitatory toxin LqqIT1.